A 278-amino-acid chain; its full sequence is Small ribosomal subunit biogenesis GTPase RsgA (278 aa).

Residues 62–218 (KNELTRPRVA…ICDTPGFNVI (157 aa)) form the CP-type G domain. GTP contacts are provided by residues 112 to 115 (TKTD) and 162 to 170 (GQSGVGKSS). Zn(2+) contacts are provided by Cys-241, Cys-246, His-248, and Cys-254.

The protein belongs to the TRAFAC class YlqF/YawG GTPase family. RsgA subfamily. In terms of assembly, monomer. Associates with 30S ribosomal subunit, binds 16S rRNA. Zn(2+) is required as a cofactor.

It is found in the cytoplasm. One of several proteins that assist in the late maturation steps of the functional core of the 30S ribosomal subunit. Helps release RbfA from mature subunits. May play a role in the assembly of ribosomal proteins into the subunit. Circularly permuted GTPase that catalyzes slow GTP hydrolysis, GTPase activity is stimulated by the 30S ribosomal subunit. The protein is Small ribosomal subunit biogenesis GTPase RsgA of Mycoplasma genitalium (strain ATCC 33530 / DSM 19775 / NCTC 10195 / G37) (Mycoplasmoides genitalium).